Here is a 231-residue protein sequence, read N- to C-terminus: 7-cyano-7-deazaguanine synthase (231 aa).

An ATP-binding site is contributed by 7 to 17; the sequence is LSSGLDSVAAL. Zn(2+)-binding residues include Cys-195, Cys-203, Cys-206, and Cys-209.

It belongs to the QueC family. Zn(2+) serves as cofactor.

The enzyme catalyses 7-carboxy-7-deazaguanine + NH4(+) + ATP = 7-cyano-7-deazaguanine + ADP + phosphate + H2O + H(+). Its pathway is purine metabolism; 7-cyano-7-deazaguanine biosynthesis. Its function is as follows. Catalyzes the ATP-dependent conversion of 7-carboxy-7-deazaguanine (CDG) to 7-cyano-7-deazaguanine (preQ(0)). The sequence is that of 7-cyano-7-deazaguanine synthase from Methanosarcina barkeri (strain Fusaro / DSM 804).